The primary structure comprises 147 residues: MALKRINKELTDLGRDPPSSCSAGPVGEDLFHWQATIMGPSDSPYAGGVFFLAIHFPTDYPFKPPKVNFTTRIYHPNINSNGSICLDILRDQWSPALTISKVLLSICSMLTDPNPDDPLVPEIAHVYKTARAQYESTAREWTRKYAI.

In terms of domain architecture, UBC core spans 1 to 147 (MALKRINKEL…AREWTRKYAI (147 aa)). Residue cysteine 107 is the Glycyl thioester intermediate of the active site.

Belongs to the ubiquitin-conjugating enzyme family.

The enzyme catalyses S-ubiquitinyl-[E1 ubiquitin-activating enzyme]-L-cysteine + [E2 ubiquitin-conjugating enzyme]-L-cysteine = [E1 ubiquitin-activating enzyme]-L-cysteine + S-ubiquitinyl-[E2 ubiquitin-conjugating enzyme]-L-cysteine.. Its pathway is protein modification; protein ubiquitination. In terms of biological role, catalyzes the covalent attachment of ubiquitin to other proteins. The sequence is that of Ubiquitin-conjugating enzyme E2-16 kDa (UBC1) from Pyricularia oryzae (strain 70-15 / ATCC MYA-4617 / FGSC 8958) (Rice blast fungus).